The sequence spans 410 residues: Polyadenylation and cleavage factor homolog 5 (410 aa).

The span at 1–17 (MASNGSFSAQRNANAGT) shows a compositional bias: polar residues. The segment at 1–32 (MASNGSFSAQRNANAGTTMKRRNDNRGYGGGI) is disordered. Positions 191-214 (SKELTDLLSLLNNEKEKKTSEASN) form a coiled coil. A C2H2-type zinc finger spans residues 247-269 (RQCTSCGVRFKCQEEHSKHMDWH).

Forms a complex with cleavage and polyadenylation specificity factor (CPSF) subunits CSTF77, CLPS3, PCFS4 and PCFS1.

It localises to the nucleus. The polypeptide is Polyadenylation and cleavage factor homolog 5 (Arabidopsis thaliana (Mouse-ear cress)).